A 1588-amino-acid chain; its full sequence is Pentafunctional AROM polypeptide (1588 aa).

The segment at 1 to 392 is 3-dehydroquinate synthase; the sequence is MVQLAKVPIL…YGDSAQFVSD (392 aa). NAD(+)-binding positions include 43 to 45, 78 to 81, 109 to 111, and D114; these read DTN, ETSK, and GGV. 7-phospho-2-dehydro-3-deoxy-D-arabino-heptonate is bound at residue R125. Residue 134 to 135 participates in NAD(+) binding; that stretch reads TS. 7-phospho-2-dehydro-3-deoxy-D-arabino-heptonate-binding residues include D141 and K147. K156 lines the NAD(+) pocket. N157 provides a ligand contact to 7-phospho-2-dehydro-3-deoxy-D-arabino-heptonate. NAD(+)-binding positions include 174–177 and N185; that span reads WLET. E189 lines the Zn(2+) pocket. 7-phospho-2-dehydro-3-deoxy-D-arabino-heptonate is bound by residues 189-192 and K258; that span reads EVIK. Catalysis depends on E268, which acts as the Proton acceptor; for 3-dehydroquinate synthase activity. Residues 272–276 and H279 each bind 7-phospho-2-dehydro-3-deoxy-D-arabino-heptonate; that span reads RNLLN. H279 provides a ligand contact to Zn(2+). The active-site Proton acceptor; for 3-dehydroquinate synthase activity is the H283. 7-phospho-2-dehydro-3-deoxy-D-arabino-heptonate is bound by residues H295 and K364. H295 provides a ligand contact to Zn(2+). An EPSP synthase region spans residues 405–871; that stretch reads VYPFKDIPAD…WDVLHSELGA (467 aa). Residue C853 is the For EPSP synthase activity of the active site. The segment at 890 to 1080 is shikimate kinase; the sequence is SVVIIGMRAA…IPSGRSAFVC (191 aa). 895–902 serves as a coordination point for ATP; sequence GMRAAGKT. The tract at residues 1081 to 1293 is 3-dehydroquinase; that stretch reads LTFDDLTEQT…AAPGQLTVAQ (213 aa). H1198 (proton acceptor; for 3-dehydroquinate dehydratase activity) is an active-site residue. K1227 serves as the catalytic Schiff-base intermediate with substrate; for 3-dehydroquinate dehydratase activity. A shikimate dehydrogenase region spans residues 1306–1588; sequence PKELFVVGKP…KAIFDAVTKE (283 aa).

The protein in the N-terminal section; belongs to the sugar phosphate cyclases superfamily. Dehydroquinate synthase family. It in the 2nd section; belongs to the EPSP synthase family. In the 3rd section; belongs to the shikimate kinase family. This sequence in the 4th section; belongs to the type-I 3-dehydroquinase family. The protein in the C-terminal section; belongs to the shikimate dehydrogenase family. Homodimer. The cofactor is Zn(2+).

The protein localises to the cytoplasm. It catalyses the reaction 7-phospho-2-dehydro-3-deoxy-D-arabino-heptonate = 3-dehydroquinate + phosphate. The enzyme catalyses 3-dehydroquinate = 3-dehydroshikimate + H2O. The catalysed reaction is shikimate + NADP(+) = 3-dehydroshikimate + NADPH + H(+). It carries out the reaction shikimate + ATP = 3-phosphoshikimate + ADP + H(+). It catalyses the reaction 3-phosphoshikimate + phosphoenolpyruvate = 5-O-(1-carboxyvinyl)-3-phosphoshikimate + phosphate. The protein operates within metabolic intermediate biosynthesis; chorismate biosynthesis; chorismate from D-erythrose 4-phosphate and phosphoenolpyruvate: step 2/7. It functions in the pathway metabolic intermediate biosynthesis; chorismate biosynthesis; chorismate from D-erythrose 4-phosphate and phosphoenolpyruvate: step 3/7. Its pathway is metabolic intermediate biosynthesis; chorismate biosynthesis; chorismate from D-erythrose 4-phosphate and phosphoenolpyruvate: step 4/7. It participates in metabolic intermediate biosynthesis; chorismate biosynthesis; chorismate from D-erythrose 4-phosphate and phosphoenolpyruvate: step 5/7. The protein operates within metabolic intermediate biosynthesis; chorismate biosynthesis; chorismate from D-erythrose 4-phosphate and phosphoenolpyruvate: step 6/7. The AROM polypeptide catalyzes 5 consecutive enzymatic reactions in prechorismate polyaromatic amino acid biosynthesis. The protein is Pentafunctional AROM polypeptide of Saccharomyces cerevisiae (strain JAY291) (Baker's yeast).